Reading from the N-terminus, the 458-residue chain is Paired box protein Pax-8 (458 aa).

Residues 18–144 (GHGGLNQLGG…SSINRIIRTK (127 aa)) constitute a DNA-binding region (paired). A PAI subdomain region spans residues 21-77 (GLNQLGGAFVNGRPLPEVVRQRIVDLAHQGVRPCDISRQLRVSHGCVSKILGRYYET). Positions 96–144 (KVVEKIGDYKRQNPTMFAWEIRDRLLAEGVCDNDTVPSVSSINRIIRTK) are RED subdomain. Residues 198-217 (PGADGKRKLDDSDQESCRLS) are disordered.

It localises to the nucleus. Functionally, probable transcription factor. Involved in kidney development, acting synergistically with lhx1/lim-1 to establish the pronephric primordium in late gastrulae/early neurulae. This is Paired box protein Pax-8 from Xenopus tropicalis (Western clawed frog).